Reading from the N-terminus, the 272-residue chain is uncharacterized protein (272 aa).

Its subcellular location is the periplasm. In terms of biological role, may be involved in ulvan degradation. Ulvan is the main polysaccharide component of the Ulvales (green seaweed) cell wall. It is composed of disaccharide building blocks comprising 3-sulfated rhamnose (Rha3S) linked to D-glucuronic acid (GlcA), L-iduronic acid (IduA), or D-xylose (Xyl). This is an uncharacterized protein from Formosa agariphila (strain DSM 15362 / KCTC 12365 / LMG 23005 / KMM 3901 / M-2Alg 35-1).